Reading from the N-terminus, the 61-residue chain is Photosystem II assembly protein Psb34 (61 aa).

The helical transmembrane segment at 36-56 (LIMAAITVVLVAGLIAVAVVA) threads the bilayer.

Belongs to the Psb34 family. In terms of assembly, part of the photosystem II (PSII) assembly intermediate RC47 complex (with D1, D2, CP47, PsbE, PsbF, PsbH, Psb27 and Psb28); minor amounts are found in other PSII complexes, including mature, dimeric PSII with PsbO and PsbV. No HliA or HliB are detected in any of these complexes. Its interaction with PSII requires both CP47 (psbB) and PsbH. HliA/HliB and Psb34 probably bind to a similar site on CP47; their binding seems to be mutually exclusive.

Its subcellular location is the cellular thylakoid membrane. Functionally, involved in photosystem II (PSII) assembly and/or repair. Probably involved in conversion of late PSII assembly intermediates into mature dimeric PSII, it may mediate the optimal equlibrium of HliA/HliB among the intermediates containing CP47 (psbB) to facilitate photoprotection during assembly. This Synechocystis sp. (strain ATCC 27184 / PCC 6803 / Kazusa) protein is Photosystem II assembly protein Psb34.